The chain runs to 138 residues: MALLPDKEKLLRNFLRCANWEEKYLYIIELGQRLPELRDEDRSSQNSIQGCQSQVWIVMRQNAQGIIKLQGDSDAAIVKGLIAVVFILYDQMTPQDIVNFDVRPWFEKMALTQHLTPSRSQGLEAMIRAIRAKAAALS.

Residue Cys51 is the Cysteine persulfide intermediate of the active site.

This sequence belongs to the SufE family. As to quaternary structure, homodimer. Interacts with SufS.

The protein resides in the cytoplasm. The protein operates within cofactor biosynthesis; iron-sulfur cluster biosynthesis. Functionally, participates in cysteine desulfuration mediated by SufS. Cysteine desulfuration mobilizes sulfur from L-cysteine to yield L-alanine and constitutes an essential step in sulfur metabolism for biosynthesis of a variety of sulfur-containing biomolecules. Functions as a sulfur acceptor for SufS, by mediating the direct transfer of the sulfur atom from the S-sulfanylcysteine of SufS, an intermediate product of cysteine desulfuration process. This is Cysteine desulfuration protein SufE from Escherichia coli O17:K52:H18 (strain UMN026 / ExPEC).